Reading from the N-terminus, the 428-residue chain is C4-dicarboxylate transport protein (428 aa).

Transmembrane regions (helical) follow at residues 8 to 28 (SLYF…HFYP), 44 to 64 (LIKM…IAGM), 76 to 96 (VALL…LIIV), 142 to 162 (IGAF…LFGF), 184 to 204 (VIFG…FGAM), 222 to 242 (LIIC…GSIA), 326 to 346 (IFHQ…AAGV), and 352 to 372 (IVLA…LALI).

It belongs to the dicarboxylate/amino acid:cation symporter (DAACS) (TC 2.A.23) family.

The protein localises to the cell inner membrane. Responsible for the transport of dicarboxylates such as succinate, fumarate, and malate from the periplasm across the membrane. In Enterobacter sp. (strain 638), this protein is C4-dicarboxylate transport protein.